The chain runs to 528 residues: Exodeoxyribonuclease 7 large subunit (528 aa).

A disordered region spans residues 486–528; sequence QGDRDAVIDGESSGVLPPSAAPAPTRPTPRPKPASSSDQGSLF. The span at 504-517 shows a compositional bias: pro residues; that stretch reads SAAPAPTRPTPRPK.

It belongs to the XseA family. In terms of assembly, heterooligomer composed of large and small subunits.

It localises to the cytoplasm. The catalysed reaction is Exonucleolytic cleavage in either 5'- to 3'- or 3'- to 5'-direction to yield nucleoside 5'-phosphates.. Its function is as follows. Bidirectionally degrades single-stranded DNA into large acid-insoluble oligonucleotides, which are then degraded further into small acid-soluble oligonucleotides. The sequence is that of Exodeoxyribonuclease 7 large subunit from Caulobacter sp. (strain K31).